A 272-amino-acid chain; its full sequence is Indole-3-glycerol phosphate synthase (272 aa).

This sequence belongs to the TrpC family.

It carries out the reaction 1-(2-carboxyphenylamino)-1-deoxy-D-ribulose 5-phosphate + H(+) = (1S,2R)-1-C-(indol-3-yl)glycerol 3-phosphate + CO2 + H2O. It functions in the pathway amino-acid biosynthesis; L-tryptophan biosynthesis; L-tryptophan from chorismate: step 4/5. This Mycobacterium sp. (strain JLS) protein is Indole-3-glycerol phosphate synthase.